A 167-amino-acid chain; its full sequence is Insertion element IS1 2 protein InsB (167 aa).

Belongs to the transposase 27 family.

Functionally, absolutely required for transposition of IS1. The chain is Insertion element IS1 2 protein InsB (insB2) from Escherichia coli (strain K12).